The following is a 392-amino-acid chain: Sterol methyltransferase-like 3 (392 aa).

Residues 20–42 traverse the membrane as a helical segment; it reads VTPWQAAAGVTAAIFIGSYLWHS.

The protein belongs to the class I-like SAM-binding methyltransferase superfamily. Erg6/SMT family.

The protein resides in the microsome membrane. Unable to convert squalene, botryococcene, cycloartenol, zymosterol or lanosterol to mono-, di-, tri- or tetramethylated derivatives. The polypeptide is Sterol methyltransferase-like 3 (SMT-3) (Botryococcus braunii (Green alga)).